Consider the following 71-residue polypeptide: Small ribosomal subunit protein bS21 (71 aa).

The disordered stretch occupies residues 39–71; the sequence is EKPTQERKRKAAAAVKRQMRRTSRDVTKRKRLY. Residues 45 to 71 are compositionally biased toward basic residues; sequence RKRKAAAAVKRQMRRTSRDVTKRKRLY.

The protein belongs to the bacterial ribosomal protein bS21 family.

In Xylella fastidiosa (strain M12), this protein is Small ribosomal subunit protein bS21.